The chain runs to 63 residues: MAMCELCGKKPMFGHNVSHSNRKTNRKFKPNVQRVTVILNGVPKRMRICTRCLRTLYKEAREA.

This sequence belongs to the bacterial ribosomal protein bL28 family.

The chain is Large ribosomal subunit protein bL28 from Thermomicrobium roseum (strain ATCC 27502 / DSM 5159 / P-2).